The sequence spans 315 residues: Homoserine kinase (315 aa).

An ATP-binding site is contributed by 97 to 107; it reads PPARGLGSSAT.

This sequence belongs to the GHMP kinase family. Homoserine kinase subfamily.

The protein localises to the cytoplasm. It catalyses the reaction L-homoserine + ATP = O-phospho-L-homoserine + ADP + H(+). It functions in the pathway amino-acid biosynthesis; L-threonine biosynthesis; L-threonine from L-aspartate: step 4/5. Its function is as follows. Catalyzes the ATP-dependent phosphorylation of L-homoserine to L-homoserine phosphate. In Prochlorococcus marinus (strain SARG / CCMP1375 / SS120), this protein is Homoserine kinase.